We begin with the raw amino-acid sequence, 196 residues long: Ribosome maturation factor RimP (196 aa).

Residues 131 to 145 (KKKAGKKSQGKKAGK) show a composition bias toward basic residues. The tract at residues 131-153 (KKKAGKKSQGKKAGKKTPQAPVQ) is disordered.

This sequence belongs to the RimP family.

The protein localises to the cytoplasm. In terms of biological role, required for maturation of 30S ribosomal subunits. This Corynebacterium urealyticum (strain ATCC 43042 / DSM 7109) protein is Ribosome maturation factor RimP.